The chain runs to 219 residues: MNNQNEDTEGGRNCCTCCLSFIFTAGLTSLFLWLSLRADKPKCSIQNFFIPALGKDPNSRDNTTLNFMVRCDNPNKDKGIYYDDVHLNFSTINTTKINSSALVLVGNYTVPKFYQGHKKKAKKWGQVKPLNNQTVLRAVLPNGSAVFRLDLKTQVRFKIVFWKTKRYGVEVGADVEVNGDGVKAQKKGIKMKKSDSSFPLRSSFPISVLMNLLVFFAIR.

The N-terminal stretch at 1-38 (MNNQNEDTEGGRNCCTCCLSFIFTAGLTSLFLWLSLRA) is a signal peptide. N-linked (GlcNAc...) asparagine glycosylation is found at N62, N88, N93, N98, N107, N132, and N142. Residue D195 is the site of GPI-anchor amidated aspartate attachment. Residues 196-219 (SSFPLRSSFPISVLMNLLVFFAIR) constitute a propeptide, removed in mature form.

In terms of assembly, interacts with RIN4 (via C-terminus). Post-translationally, N-glycosylated.

It is found in the cell membrane. Involved in disease resistance. Required for resistance conferred by multiple R genes recognizing different bacterial and oomycete pathogen isolates like avirulent P.syringae or H.parasitica (downy mildew). Required for the establishment of hypersensitive response (HR) and systemic acquired resistance (SAR) after infection with the bacterial pathogen P.syringae DC3000 carrying avrRpt2. Required for resistance to the soilborne fungus V.longisporum. Interaction with RIN4 is required for the activation of the R gene RPS2 and RPS2-mediated resistance. The sequence is that of Protein NDR1 (NDR1) from Arabidopsis thaliana (Mouse-ear cress).